The chain runs to 282 residues: Bis(5'-nucleosyl)-tetraphosphatase, symmetrical (282 aa).

The protein belongs to the Ap4A hydrolase family.

The catalysed reaction is P(1),P(4)-bis(5'-adenosyl) tetraphosphate + H2O = 2 ADP + 2 H(+). Hydrolyzes diadenosine 5',5'''-P1,P4-tetraphosphate to yield ADP. The sequence is that of Bis(5'-nucleosyl)-tetraphosphatase, symmetrical from Salmonella paratyphi A (strain ATCC 9150 / SARB42).